The sequence spans 246 residues: Myelin-oligodendrocyte glycoprotein (246 aa).

An N-terminal signal peptide occupies residues Met-1 to Ala-28. One can recognise an Ig-like V-type domain in the interval Gly-29 to Glu-144. The Extracellular portion of the chain corresponds to Gly-29–Gly-153. Cysteines 52 and 126 form a disulfide. N-linked (GlcNAc...) asparagine glycosylation is present at Asn-59. Residues Val-154–Phe-174 traverse the membrane as a helical segment. The Cytoplasmic portion of the chain corresponds to Leu-175–Thr-209. The chain crosses the membrane as a helical span at residues Leu-210–Leu-230. Over His-231–Phe-246 the chain is Extracellular.

Belongs to the immunoglobulin superfamily. BTN/MOG family. As to quaternary structure, homodimer. As to expression, found exclusively in the CNS, where it is localized on the surface of myelin and oligodendrocyte cytoplasmic membranes.

Its subcellular location is the membrane. Functionally, mediates homophilic cell-cell adhesion. Minor component of the myelin sheath. May be involved in completion and/or maintenance of the myelin sheath and in cell-cell communication. The chain is Myelin-oligodendrocyte glycoprotein (MOG) from Bos taurus (Bovine).